Consider the following 476-residue polypeptide: Cysteine--tRNA ligase (476 aa).

Cys29 is a Zn(2+) binding site. Residues 31–41 (PTVYDYTHIGH) carry the 'HIGH' region motif. Zn(2+)-binding residues include Cys209, His234, and Glu238. Residues 266-270 (KMSKS) carry the 'KMSKS' region motif. ATP is bound at residue Lys269.

This sequence belongs to the class-I aminoacyl-tRNA synthetase family. It depends on Zn(2+) as a cofactor.

The protein localises to the cytoplasm. It carries out the reaction tRNA(Cys) + L-cysteine + ATP = L-cysteinyl-tRNA(Cys) + AMP + diphosphate. This is Cysteine--tRNA ligase from Thermococcus kodakarensis (strain ATCC BAA-918 / JCM 12380 / KOD1) (Pyrococcus kodakaraensis (strain KOD1)).